We begin with the raw amino-acid sequence, 46 residues long: Defensin-like protein AX2 (46 aa).

Intrachain disulfides connect Cys-3–Cys-46, Cys-14–Cys-34, Cys-20–Cys-40, and Cys-24–Cys-42.

Leaves and flowers.

Strong inhibiting activity against C.beticola and other filamentous fungi. Little or no effect against bacteria. The sequence is that of Defensin-like protein AX2 from Beta vulgaris (Sugar beet).